Here is a 290-residue protein sequence, read N- to C-terminus: MKLAVYGKGGIGKSTTSCNISVALSKRGKKVLQIGCDPKHDSTFTLTGFLIPTIIDTLQAKDYHYEDVWPEDVIYKGYGGVDCVEAGGPPAGAGCGGYVVGETVKLLKELNAFDEYDIILFDVLGDVVCGGFAAPLNYADYCLIITDNGFDALFAANRIAASVREKARTHSLRLAGLVGNRTDKRDLIDKYIDCVPMPVLEVLPLIEDIRVSRVKGKTLFEMAESDTNLAYVCDYYLNIADQLIARPEGVVPKEAADRELFSLLSDFYLNPKSNTTKSTADEEELDLMMV.

Residues 10 to 15 (GIGKST) and K39 contribute to the ATP site. S14 contributes to the Mg(2+) binding site. 2 residues coordinate [4Fe-4S] cluster: C95 and C129. Position 180-181 (180-181 (NR)) interacts with ATP.

It belongs to the NifH/BchL/ChlL family. In terms of assembly, homodimer. Protochlorophyllide reductase is composed of three subunits; ChlL, ChlN and ChlB. [4Fe-4S] cluster serves as cofactor.

The protein localises to the plastid. It is found in the chloroplast. It catalyses the reaction chlorophyllide a + oxidized 2[4Fe-4S]-[ferredoxin] + 2 ADP + 2 phosphate = protochlorophyllide a + reduced 2[4Fe-4S]-[ferredoxin] + 2 ATP + 2 H2O. It participates in porphyrin-containing compound metabolism; chlorophyll biosynthesis (light-independent). Functionally, component of the dark-operative protochlorophyllide reductase (DPOR) that uses Mg-ATP and reduced ferredoxin to reduce ring D of protochlorophyllide (Pchlide) to form chlorophyllide a (Chlide). This reaction is light-independent. The L component serves as a unique electron donor to the NB-component of the complex, and binds Mg-ATP. The chain is Light-independent protochlorophyllide reductase iron-sulfur ATP-binding protein from Porphyra purpurea (Red seaweed).